Consider the following 254-residue polypeptide: 3-deoxy-manno-octulosonate cytidylyltransferase (254 aa).

It belongs to the KdsB family.

It is found in the cytoplasm. The catalysed reaction is 3-deoxy-alpha-D-manno-oct-2-ulosonate + CTP = CMP-3-deoxy-beta-D-manno-octulosonate + diphosphate. It participates in nucleotide-sugar biosynthesis; CMP-3-deoxy-D-manno-octulosonate biosynthesis; CMP-3-deoxy-D-manno-octulosonate from 3-deoxy-D-manno-octulosonate and CTP: step 1/1. The protein operates within bacterial outer membrane biogenesis; lipopolysaccharide biosynthesis. In terms of biological role, activates KDO (a required 8-carbon sugar) for incorporation into bacterial lipopolysaccharide in Gram-negative bacteria. The protein is 3-deoxy-manno-octulosonate cytidylyltransferase of Pseudomonas entomophila (strain L48).